A 315-amino-acid polypeptide reads, in one-letter code: Isoaspartyl peptidase/L-asparaginase 1 (315 aa).

S169 is subject to Phosphoserine. T183 functions as the Nucleophile in the catalytic mechanism. Residues 211–214 (RIGD) and 233–236 (TGKG) each bind substrate.

Belongs to the Ntn-hydrolase family. Heterotetramer of two alpha and two beta chains arranged as a dimer of alpha/beta heterodimers. Cleaved into an alpha and beta chain by autocatalysis; this activates the enzyme. The N-terminal residue of the beta subunit is responsible for the nucleophile hydrolase activity.

It catalyses the reaction Cleavage of a beta-linked Asp residue from the N-terminus of a polypeptide.. Acts in asparagine catabolism but also in the final steps of protein and degradation via hydrolysis of a range of isoaspartyl dipeptides. The affinity for Asn and at least 4 isoaspartyl dipeptides (L-beta-Asp-Ala, L-beta-Asp-Gly, L-beta-Asp-Leu, L-beta-Asp-Phe) is quite low, KM being greater than 4.0 mM. The enzyme is inactive on alpha-aspartyl dipeptides. This chain is Isoaspartyl peptidase/L-asparaginase 1, found in Arabidopsis thaliana (Mouse-ear cress).